The following is a 335-amino-acid chain: Ankyrin repeat and SOCS box protein 1 (335 aa).

6 ANK repeats span residues 36–68 (CEDTRLHDAAYVGDLQTLRSLLQEESYRSRINE), 77–106 (LPCTPLRIAATAGHGSCVDFLIRKGAEVDL), 110–139 (KGQTALYVAVVNGHLESTQILLEAGADPNG), 143–172 (HRSTPVYHASRVGRADILKALIRYGADVDV), 191–220 (LVVCPLYISAAYHNLQCFRLLLLAGANPDF), and 235–265 (SPGCVMDAVLRHGCEAAFVSLLVEFGANLNL). One can recognise an SOCS box domain in the interval 286–335 (LQVFKEARSVPRTLLCLCRVAVRRALGKHRLHLIPSLPLPDPIKKFLLHE).

It belongs to the ankyrin SOCS box (ASB) family. Interacts with CUL5 and RNF7. Interacts with TAB2 and TAB3.

The protein resides in the cytoplasm. It functions in the pathway protein modification; protein ubiquitination. Functionally, probable substrate-recognition component of a SCF-like ECS (Elongin-Cullin-SOCS-box protein) E3 ligase complex which mediates the ubiquitination and subsequent proteasomal degradation of target proteins. Mediates Notch-induced ubiquitination and degradation of TCF3/E2A and JAK2. Functions as a tumor suppressor by enhancing CHCHD3 'Lys-48'-linked ubiquitination, leading to inhibition of the CHCHD3/ROS signaling pathway. Suppresses TAB2-linked 'Lys-48' polyubiquitination and consequently facilitates the initiation of NF-kappa-B and MAPK signaling cascades. May play a role in testis development. This chain is Ankyrin repeat and SOCS box protein 1 (ASB1), found in Homo sapiens (Human).